Reading from the N-terminus, the 61-residue chain is Aerolysin regulatory protein (61 aa).

Residues 1–14 show a composition bias toward basic residues; that stretch reads MMIKRHLPQPRHRE. Residues 1–61 form a disordered region; the sequence is MMIKRHLPQP…GQTHTGPQIR (61 aa). A compositionally biased stretch (polar residues) spans 51 to 61; that stretch reads DGQTHTGPQIR.

Regulation of the expression of aerolysin. The sequence is that of Aerolysin regulatory protein (aerC) from Aeromonas sobria.